The sequence spans 974 residues: Short transient receptor potential channel 5 (974 aa).

At 1 to 325 the chain is on the cytoplasmic side; that stretch reads MAQLYYKKVN…YDGFPGWRRK (325 aa). ANK repeat units follow at residues 30-60, 69-97, 98-124, and 141-170; these read SAEEKAFLNAVEKGDYATVKQALQEAEIYYN, LGRSALLIAIENENLEIMELLLNHSVYVG, DALLYAIRKEVVGAVELLLSYRKPSGE, and PDITPIMLAAHTNNYEIIKLLVQKRVTIPR. Positions 172, 176, 178, and 181 each coordinate Zn(2+). The discontinuously helical intramembrane region spans 326–360; that stretch reads HWVVKLLTCMTIGFLFPMLSIAYLISPRSNLGLFI. The Cytoplasmic segment spans residues 361–363; that stretch reads KKP. The chain crosses the membrane as a helical span at residues 364–384; sequence FIKFICHTASYLTFLFMLLLA. The Extracellular portion of the chain corresponds to 385 to 404; that stretch reads SQHIVRTDLHVQGPPPTVVE. A helical membrane pass occupies residues 405–419; that stretch reads WMILPWVLGFIWGEI. Ca(2+) contacts are provided by Glu418, Glu421, Asn436, and Asp439. The Cytoplasmic segment spans residues 420-433; the sequence is KEMWDGGFTEYIHD. Residues 434–454 traverse the membrane as a helical segment; it reads WWNLMDFAMNSLYLATISLKI. Over 455 to 476 the chain is Extracellular; sequence VAYVKYNGSRPREEWEMWHPTL. Asn461 carries N-linked (GlcNAc...) asparagine glycosylation. The helical transmembrane segment at 477 to 497 threads the bilayer; that stretch reads IAEALFAISNILSSLRLISLF. Residues 498–512 lie on the Cytoplasmic side of the membrane; it reads TANSHLGPLQISLGR. The chain crosses the membrane as a helical span at residues 513–535; sequence MLLDILKFLFIYCLVLLAFANGL. At 536–603 the chain is on the extracellular side; that stretch reads NQLYFYYETR…HEFTEFVGAT (68 aa). Residues Cys553 and Cys558 are joined by a disulfide bond. The chain crosses the membrane as a helical span at residues 604 to 624; sequence MFGTYNVISLVVLLNMLIAMM. The Cytoplasmic segment spans residues 625–974; sequence NNSYQLIADH…GQEEQVTTRL (350 aa). Disordered regions lie at residues 766 to 795 and 811 to 838; these read QPRRSLSTSSTELSQRDDTNDGSGGARAKS and GPPLIRTMPRASGAQGKSKAESSSKRSF. Low complexity predominate over residues 769-778; sequence RSLSTSSTEL. Residues 972-974 form an essential for binding to NHERF1 PDZ domain region; that stretch reads TRL.

It belongs to the transient receptor (TC 1.A.4) family. STrpC subfamily. TRPC5 sub-subfamily. In terms of assembly, homotetramer. Heterotetramer with TRPC1 and/or TRPC4. Each subunit in the homomeric ion channel (via ANK repeats) interacts with one copy of GTP-bound GNAI3; the interaction is direct and activates the ion channel. Interacts with TRPC4AP. Interacts with NHERF1. Interacts with MX1 and RNF24. Interacts (via C-terminus) with CABP1. Interacts with SESTD1 (via the spectrin 1 repeat). Interacts with PLSCR1. Interacts with PKD2L2. In terms of tissue distribution, expressed in brain.

The protein localises to the cell membrane. The enzyme catalyses Ca(2+)(in) = Ca(2+)(out). Its activity is regulated as follows. Activated by G-protein coupled receptors via direct interaction with GTP-bound GNAI3, which increases the channel sensitivity to phosphatidylinositol bisphosphate. May be activated by intracellular calcium store depletion. Calcium channel activity is enhanced by MYLK, that promotes its subcellular localization at the plasma membrane. Its function is as follows. Forms a receptor-activated non-selective calcium permeant cation channel. Mediates calcium-dependent phosphatidylserine externalization and apoptosis in neurons via its association with PLSCR1. Acts on distinct neuronal populations in the hypothalamus to regulate innate behaviors including feeding, anxiety (flight/fight/fear), socialization and maternal care. The protein is Short transient receptor potential channel 5 (TRPC5) of Oryctolagus cuniculus (Rabbit).